Consider the following 290-residue polypeptide: Probable prolyl 4-hydroxylase 8 (290 aa).

Topologically, residues 1-19 are cytoplasmic; it reads MAKKPKQLRNKPRKSFSTQ. Residues 20–40 form a helical; Signal-anchor for type II membrane protein membrane-spanning segment; it reads TFTVVVLVLFVILILVGLGIF. The Lumenal segment spans residues 41 to 290; it reads SLPSTNKTSS…TKWFHVHEYN (250 aa). An N-linked (GlcNAc...) asparagine glycan is attached at asparagine 46. The Fe2OG dioxygenase domain maps to 163-286; that stretch reads NGEGLQVLHY…KWSSTKWFHV (124 aa). Residues histidine 181 and aspartate 183 each contribute to the Fe cation site. An N-linked (GlcNAc...) asparagine glycan is attached at asparagine 222. Histidine 267 contributes to the Fe cation binding site. Lysine 277 serves as a coordination point for 2-oxoglutarate.

The protein belongs to the P4HA family. Requires Fe(2+) as cofactor. The cofactor is L-ascorbate.

It is found in the endoplasmic reticulum membrane. It carries out the reaction L-prolyl-[collagen] + 2-oxoglutarate + O2 = trans-4-hydroxy-L-prolyl-[collagen] + succinate + CO2. Catalyzes the post-translational formation of 4-hydroxyproline in -Xaa-Pro-Gly- sequences in proline-rich peptide sequences of plant glycoproteins and other proteins. Hydroxyprolines are important constituent of many plant cell wall glycoproteins such as extensins, hydroxyproline-rich glycoproteins, lectins and arabinogalactan proteins. The chain is Probable prolyl 4-hydroxylase 8 from Arabidopsis thaliana (Mouse-ear cress).